A 133-amino-acid polypeptide reads, in one-letter code: Small ribosomal subunit protein uS9 (133 aa).

Positions 102-113 (KVEGYLSRDPRA) are enriched in basic and acidic residues. Positions 102 to 133 (KVEGYLSRDPRAKERRKYGLKKARKAPQFSKR) are disordered. Basic residues predominate over residues 114 to 133 (KERRKYGLKKARKAPQFSKR).

The protein belongs to the universal ribosomal protein uS9 family.

The chain is Small ribosomal subunit protein uS9 from Gloeobacter violaceus (strain ATCC 29082 / PCC 7421).